Here is a 117-residue protein sequence, read N- to C-terminus: Acidic phospholipase A2 (117 aa).

7 disulfides stabilise this stretch: Cys11–Cys70, Cys25–Cys116, Cys27–Cys43, Cys42–Cys98, Cys49–Cys91, Cys59–Cys84, and Cys77–Cys89. 3 residues coordinate Ca(2+): Tyr26, Gly28, and Gly30. Residue His46 is part of the active site. Asp47 contributes to the Ca(2+) binding site. Asn80 carries an N-linked (GlcNAc...) asparagine glycan. Residue Asp92 is part of the active site.

Ca(2+) serves as cofactor. Expressed by the venom gland.

The protein localises to the secreted. It carries out the reaction a 1,2-diacyl-sn-glycero-3-phosphocholine + H2O = a 1-acyl-sn-glycero-3-phosphocholine + a fatty acid + H(+). Functionally, snake venom phospholipase A2 (PLA2) that shows strong myotoxicity and induces edema in mice. Shows no cytotoxicity in vitro. Has a strong anticoagulant effect in vitro. PLA2 catalyzes the calcium-dependent hydrolysis of the 2-acyl groups in 3-sn-phosphoglycerides. This chain is Acidic phospholipase A2, found in Micrurus dumerilii (Coral snake).